Consider the following 313-residue polypeptide: Formate-nitrite transporter (313 aa).

Over 1 to 46 the chain is Cytoplasmic; that stretch reads MTKGSKYTIDPISVKTACTSEESYIRCVEYGKGKAHYPNLSLLAKA. A helical transmembrane segment spans residues 47 to 67; sequence ILAGVFVGVCAHASGIAGGHF. The Extracellular segment spans residues 68–77; it reads YYHKLREHVG. A helical transmembrane segment spans residues 78–98; sequence ISMSAFVYGFTFPIAFLCIIA. The Cytoplasmic segment spans residues 99-127; the sequence is TGSDLFTGNTLAVTTALLQRKVTLLEYLR. Residues 128–148 traverse the membrane as a helical segment; sequence VMSISLFGNYVGAVSFAFFVS. The Extracellular portion of the chain corresponds to 149–184; that stretch reads HLSGAFKKHEEIGKNHIFQFLNDIAEKKVSHTFVQC. A helical membrane pass occupies residues 185–205; sequence VCLAIGCNIFVCLAVYFVLTI. Residues 206-210 are Cytoplasmic-facing; that stretch reads KDGSG. The helical transmembrane segment at 211–231 threads the bilayer; that stretch reads MVFSVFFAVYAFAIAGYEHII. Residues 232-256 are Extracellular-facing; sequence ANMYTLNLALMIEANVDWTKVYVDN. The chain crosses the membrane as a helical span at residues 257-277; sequence LLPTLIGNYIAGAIVLACPLF. Topologically, residues 278-313 are cytoplasmic; sequence YIYRHSYSDYEKTRGDGGNSGLKSLSIEMQNGSSGR. The disordered stretch occupies residues 290–313; it reads TRGDGGNSGLKSLSIEMQNGSSGR. The segment covering 298-313 has biased composition (polar residues); that stretch reads GLKSLSIEMQNGSSGR.

Belongs to the FNT transporter (TC 1.A.16) family. As to quaternary structure, homopentamer.

Its subcellular location is the cell membrane. The protein localises to the vacuole membrane. It carries out the reaction (S)-lactate(in) + H(+)(in) = (S)-lactate(out) + H(+)(out). The catalysed reaction is formate(in) + H(+)(in) = formate(out) + H(+)(out). It catalyses the reaction pyruvate(out) + H(+)(out) = pyruvate(in) + H(+)(in). The enzyme catalyses acetate(out) + H(+)(out) = acetate(in) + H(+)(in). Inhibited by the Malaria Box compound MMV007839 and its derivatives BH296 and BH267.meta. Its function is as follows. Monocarboxylate-proton symporter that mediates the efflux of the waste product lactate in the intraerythrocytic parasites; active in acidic-to-neutral pH range. Transports L-lactate. The protein is Formate-nitrite transporter of Plasmodium vivax.